A 260-amino-acid chain; its full sequence is Small ribosomal subunit protein cS22 (260 aa).

A chloroplast-targeting transit peptide spans 1 to 62; the sequence is MATISSILPC…TNPPLLKVRA (62 aa). Low complexity predominate over residues 63 to 78; that stretch reads VVTEETSSSSTASSSS. A disordered region spans residues 63–83; that stretch reads VVTEETSSSSTASSSSDGEGA. RRM domains lie at 84–162 and 184–260; these read RRLY…ITEK and YKVY…VNKA.

Component of the chloroplast small ribosomal subunit (SSU). Mature 70S chloroplast ribosomes of higher plants consist of a small (30S) and a large (50S) subunit. The 30S small subunit contains 1 molecule of ribosomal RNA (16S rRNA) and 24 different proteins. The 50S large subunit contains 3 rRNA molecules (23S, 5S and 4.5S rRNA) and 33 different proteins.

The protein resides in the plastid. The protein localises to the chloroplast. Functionally, component of the chloroplast ribosome (chloro-ribosome), a dedicated translation machinery responsible for the synthesis of chloroplast genome-encoded proteins, including proteins of the transcription and translation machinery and components of the photosynthetic apparatus. cS22 may have a role in the recruitment of stored chloroplast mRNAs for active protein synthesis. The protein is Small ribosomal subunit protein cS22 (PSRP2) of Spinacia oleracea (Spinach).